Reading from the N-terminus, the 183-residue chain is UPF0397 protein PBPRA2239 (183 aa).

The next 5 membrane-spanning stretches (helical) occupy residues 8–28 (VVLI…MFGI), 41–61 (AVLA…VGFI), 69–89 (FAGW…GLII), 110–130 (FALF…CSAY), and 147–167 (LIII…YILT).

This sequence belongs to the UPF0397 family.

The protein resides in the cell membrane. In Photobacterium profundum (strain SS9), this protein is UPF0397 protein PBPRA2239.